A 617-amino-acid polypeptide reads, in one-letter code: tRNA uridine 5-carboxymethylaminomethyl modification enzyme MnmG (617 aa).

Residues 9–14 (GAGHAG), valine 121, and threonine 176 each bind FAD. 269-283 (GPRYCPSIEDKFVRF) is a binding site for NAD(+). Glutamine 366 lines the FAD pocket.

Belongs to the MnmG family. In terms of assembly, homodimer. Heterotetramer of two MnmE and two MnmG subunits. FAD is required as a cofactor.

Its subcellular location is the cytoplasm. Its function is as follows. NAD-binding protein involved in the addition of a carboxymethylaminomethyl (cmnm) group at the wobble position (U34) of certain tRNAs, forming tRNA-cmnm(5)s(2)U34. This chain is tRNA uridine 5-carboxymethylaminomethyl modification enzyme MnmG, found in Acholeplasma laidlawii (strain PG-8A).